The primary structure comprises 486 residues: Serine/threonine-protein phosphatase 2A 56 kDa regulatory subunit alpha isoform (486 aa).

Over residues 1 to 18 the composition is skewed to low complexity; the sequence is MSSSSPPAGAASAAISAS. Residues 1–52 are disordered; the sequence is MSSSSPPAGAASAAISASEKVDGFTRKSVRKAQRQKRSQGSSQFRSQGSQAE. Ser-2 carries the post-translational modification N-acetylserine. The span at 27 to 37 shows a compositional bias: basic residues; the sequence is KSVRKAQRQKR. Over residues 38 to 51 the composition is skewed to low complexity; that stretch reads SQGSSQFRSQGSQA. Phosphoserine is present on residues Ser-41, Ser-42, and Ser-49.

This sequence belongs to the phosphatase 2A regulatory subunit B56 family. In terms of assembly, PP2A consists of a common heterodimeric core enzyme, composed of a 36 kDa catalytic subunit (subunit C) and a 65 kDa constant regulatory subunit (PR65 or subunit A), that associates with a variety of regulatory subunits. Proteins that associate with the core dimer include three families of regulatory subunits B (the R2/B/PR55/B55, R3/B''/PR72/PR130/PR59 and R5/B'/B56 families), the 48 kDa variable regulatory subunit, viral proteins, and cell signaling molecules. Interacts with SGO1. Post-translationally, phosphorylated on serine residues. Widely expressed with the highest expression in heart and skeletal muscle.

The protein resides in the cytoplasm. The protein localises to the nucleus. It localises to the chromosome. Its subcellular location is the centromere. In terms of biological role, the B regulatory subunit might modulate substrate selectivity and catalytic activity, and might also direct the localization of the catalytic enzyme to a particular subcellular compartment. In Homo sapiens (Human), this protein is Serine/threonine-protein phosphatase 2A 56 kDa regulatory subunit alpha isoform (PPP2R5A).